The primary structure comprises 213 residues: MPRLLRLSLLWLGLLLVRFSRELSDISSARKLCGRYLVKEIEKLCGHANWSQFRFEEETPFSRLIAQASEKVEAYSPYQFESPQTASPARGRGTNPVSTSWEEAVNSWEMQSLPEYKDKKGYSPLGKTREFSSSHNINVYIHENAKFQKKRRNKIKTLSNLFWGHHPQRKRRGYSEKCCLTGCTKEELSIACLPYIDFKRLKEKRSSLVTKIY.

Positions 1–20 (MPRLLRLSLLWLGLLLVRFS) are cleaved as a signal peptide. 3 disulfide bridges follow: Cys-33/Cys-179, Cys-45/Cys-192, and Cys-178/Cys-183. The propeptide at 55–168 (FEEETPFSRL…SNLFWGHHPQ (114 aa)) is connecting peptide. Positions 201–213 (LKEKRSSLVTKIY) are excised as a propeptide.

This sequence belongs to the insulin family. Testis specific.

It localises to the secreted. Its function is as follows. May have a role in sperm development and fertilization. This is Insulin-like peptide INSL6 (INSL6) from Homo sapiens (Human).